A 192-amino-acid polypeptide reads, in one-letter code: Adenylate kinase (192 aa).

10-18 provides a ligand contact to ATP; the sequence is GVPGVGSTT.

This sequence belongs to the archaeal adenylate kinase family. Monomer.

It localises to the cytoplasm. The catalysed reaction is AMP + ATP = 2 ADP. In Methanococcus vannielii (strain ATCC 35089 / DSM 1224 / JCM 13029 / OCM 148 / SB), this protein is Adenylate kinase.